The primary structure comprises 99 residues: ATP-dependent Clp protease adapter protein ClpS (99 aa).

The protein belongs to the ClpS family. Binds to the N-terminal domain of the chaperone ClpA.

Involved in the modulation of the specificity of the ClpAP-mediated ATP-dependent protein degradation. The protein is ATP-dependent Clp protease adapter protein ClpS of Acetivibrio thermocellus (strain ATCC 27405 / DSM 1237 / JCM 9322 / NBRC 103400 / NCIMB 10682 / NRRL B-4536 / VPI 7372) (Clostridium thermocellum).